Consider the following 44-residue polypeptide: Protein PsbN (44 aa).

The helical transmembrane segment at 6 to 26 (FFFTIFLWCLLLSITGYSIYV) threads the bilayer.

It belongs to the PsbN family.

It localises to the plastid. The protein localises to the chloroplast thylakoid membrane. May play a role in photosystem I and II biogenesis. This chain is Protein PsbN, found in Chlorella vulgaris (Green alga).